The primary structure comprises 123 residues: MLVQNICSTKAYNMLILNNNAFLVDVRTQEEWKQVGIPHLDNKNKVIFLSLQLNKNFEDNFLSIINEKIDTAIFFLCRSGYRSFIAANFIANIGYKNCYNISDGFEGNNQDKGWKQNNLPWQF.

Residues 17–117 (LNNNAFLVDV…NNQDKGWKQN (101 aa)) form the Rhodanese domain.

This is an uncharacterized protein from Rickettsia prowazekii (strain Madrid E).